A 433-amino-acid polypeptide reads, in one-letter code: Homogentisate 1,2-dioxygenase (433 aa).

The Proton acceptor role is filled by histidine 288. The Fe cation site is built by histidine 331 and glutamate 337. The homogentisate site is built by tyrosine 346 and histidine 367. Histidine 367 serves as a coordination point for Fe cation.

It belongs to the homogentisate dioxygenase family. In terms of assembly, hexamer; dimer of trimers. Requires Fe cation as cofactor.

The catalysed reaction is homogentisate + O2 = 4-maleylacetoacetate + H(+). It functions in the pathway amino-acid degradation; L-phenylalanine degradation; acetoacetate and fumarate from L-phenylalanine: step 4/6. Functionally, involved in the catabolism of homogentisate (2,5-dihydroxyphenylacetate or 2,5-OH-PhAc), a central intermediate in the degradation of phenylalanine and tyrosine. Catalyzes the oxidative ring cleavage of the aromatic ring of homogentisate to yield maleylacetoacetate. The chain is Homogentisate 1,2-dioxygenase from Pseudomonas putida (strain GB-1).